Here is a 585-residue protein sequence, read N- to C-terminus: Frizzled-10 (585 aa).

An N-terminal signal peptide occupies residues 1-24; the sequence is MGPAAGNLVRAVLALCWLAEHCAG. The Extracellular portion of the chain corresponds to 25 to 229; the sequence is ISSIDIERPG…DVYWSKDDKQ (205 aa). Positions 33–154 constitute an FZ domain; the sequence is PGDGRCQPIE…NDPNYLCMEA (122 aa). 5 disulfides stabilise this stretch: cysteine 38-cysteine 99, cysteine 46-cysteine 92, cysteine 83-cysteine 121, cysteine 110-cysteine 151, and cysteine 114-cysteine 138. N-linked (GlcNAc...) asparagine glycosylation is present at asparagine 52. A disordered region spans residues 155–195; sequence PNNGSDEPPRGSSMLPPMFRPQRPSTGHDLQQHKDSLSRTS. A glycan (N-linked (GlcNAc...) asparagine) is linked at asparagine 157. Residues 230–250 form a helical membrane-spanning segment; that stretch reads FAVIWIAIWSILCFFSSAFTV. Over 251–265 the chain is Cytoplasmic; sequence LTFLIDPQRFKYPER. Residues 266–286 traverse the membrane as a helical segment; the sequence is PIIFLSMCYCVYSVGYIIRLF. The Extracellular segment spans residues 287 to 314; it reads SGAESIACDRDSGQLYVIQEGLESTGCT. The chain crosses the membrane as a helical span at residues 315-335; sequence IVFLVLYYFGMASSLWWVILT. The Cytoplasmic portion of the chain corresponds to 336–355; that stretch reads LTWFLAAGKKWGHEAIEANS. Residues 356–376 form a helical membrane-spanning segment; the sequence is SYFHLAAWAIPAVKTIMILVM. Topologically, residues 377–397 are extracellular; the sequence is RRVAGDELTGLCYVGSMDVNA. The helical transmembrane segment at 398-418 threads the bilayer; the sequence is LTGFVLIPLACYLIIGTSFIL. The Cytoplasmic segment spans residues 419-447; that stretch reads SGFVALFHIRRVMKTGGENTDKLEKLMVR. Residues 448 to 468 form a helical membrane-spanning segment; it reads IGVFSVLYTVPATCVIACYFY. Topologically, residues 469 to 506 are extracellular; that stretch reads ERLNMDYWKIVASQQKCKMNNQTKNLDCMMNNSIPAVE. Residues asparagine 489 and asparagine 499 are each glycosylated (N-linked (GlcNAc...) asparagine). A helical transmembrane segment spans residues 507 to 527; sequence IFMVKIFMLLVVGITSGMWIW. The Cytoplasmic portion of the chain corresponds to 528–585; it reads TSKTLQSWQNVCSRRLKKRSRRKPASVITSSGIYKKPQHPQKTHLAKYESTLQPPTCV. The short motif at 530–535 is the Lys-Thr-X-X-X-Trp motif, mediates interaction with the PDZ domain of Dvl family members element; sequence KTLQSW. Residues 583–585 carry the PDZ-binding motif; the sequence is TCV.

Belongs to the G-protein coupled receptor Fz/Smo family. In terms of assembly, interacts with WNT7A. As to expression, expressed in the dorsal ectoderm overlying the developing spinal cord.

The protein localises to the cell membrane. Functionally, receptor for Wnt proteins. Functions in the canonical Wnt/beta-catenin signaling pathway. Activation by WNT7A induces expression of beta-catenin target genes. The canonical Wnt/beta-catenin signaling pathway leads to the activation of disheveled proteins, inhibition of GSK-3 kinase, nuclear accumulation of beta-catenin and activation of Wnt target genes. A second signaling pathway involving PKC and calcium fluxes has been seen for some family members, but it is not yet clear if it represents a distinct pathway or if it can be integrated in the canonical pathway, as PKC seems to be required for Wnt-mediated inactivation of GSK-3 kinase. Both pathways seem to involve interactions with G-proteins. May be involved in transduction and intercellular transmission of polarity information during tissue morphogenesis and/or in differentiated tissues. This Gallus gallus (Chicken) protein is Frizzled-10 (FZD10).